A 282-amino-acid polypeptide reads, in one-letter code: U1 small nuclear ribonucleoprotein A (282 aa).

2 consecutive RRM domains span residues 10–89 and 208–282; these read NTIY…YSKT and HILF…FAKK.

This sequence belongs to the RRM U1 A/B'' family. U1 snRNP is composed of the 7 core Sm proteins snrpb, snrpd1, snrpd2, snrpd3, snrpe, snrpf and snrpg that assemble in a heptameric protein ring on the Sm site of the small nuclear RNA to form the core snRNP, and at least three U1 snRNP-specific proteins snrnp70/U1-70K, snrpa/U1-A and snrpc/U1-C.

It localises to the nucleus. Component of the spliceosomal U1 snRNP, which is essential for recognition of the pre-mRNA 5' splice-site and the subsequent assembly of the spliceosome. U1 snRNP is the first snRNP to interact with pre-mRNA. This interaction is required for the subsequent binding of U2 snRNP and the U4/U6/U5 tri-snRNP. Snrpa binds stem loop II of U1 snRNA. The chain is U1 small nuclear ribonucleoprotein A (snrpa) from Xenopus laevis (African clawed frog).